We begin with the raw amino-acid sequence, 2153 residues long: RNA-directed RNA polymerase L (2153 aa).

Mn(2+)-binding residues include His-36, Glu-54, Asp-97, Glu-110, and Val-111. Lys-124 serves as the catalytic For endonuclease activity. A RdRp catalytic domain is found at 957–1143 (TGKKIRFKRK…AVNQEMWKSM (187 aa)). Asp-1100 lines the Mg(2+) pocket.

This sequence belongs to the Bunyavirales RNA polymerase family. In terms of assembly, interacts with the viral nucleoprotein. Requires Mn(2+) as cofactor. Mg(2+) serves as cofactor.

Its subcellular location is the host cytoplasm. The protein resides in the host perinuclear region. It carries out the reaction RNA(n) + a ribonucleoside 5'-triphosphate = RNA(n+1) + diphosphate. RNA-dependent RNA polymerase, which is responsible for the replication and transcription of the viral RNA genome using antigenomic RNA as an intermediate. During transcription, synthesizes subgenomic RNAs and assures their capping by a cap-snatching mechanism, which involves the endonuclease activity cleaving the host capped pre-mRNAs. These short capped RNAs are then used as primers for viral transcription. Cleaves ssRNA substrates but not DNA. Seems to downregulate the expression of its own and heterologous mRNAs through its endonuclease activity. This is RNA-directed RNA polymerase L from Black Creek Canal orthohantavirus (BCCV).